We begin with the raw amino-acid sequence, 459 residues long: tRNA modification GTPase MnmE (459 aa).

Arg20, Glu85, and Arg124 together coordinate (6S)-5-formyl-5,6,7,8-tetrahydrofolate. One can recognise a TrmE-type G domain in the interval 221–380 (GISTVIIGRP…LEEAIQSLFF (160 aa)). A K(+)-binding site is contributed by Asn231. GTP contacts are provided by residues 231 to 236 (NVGKSS), 250 to 256 (TDIPGTT), and 275 to 278 (DTAG). Residue Ser235 coordinates Mg(2+). Thr250, Ile252, and Thr255 together coordinate K(+). Thr256 serves as a coordination point for Mg(2+). Lys459 provides a ligand contact to (6S)-5-formyl-5,6,7,8-tetrahydrofolate.

It belongs to the TRAFAC class TrmE-Era-EngA-EngB-Septin-like GTPase superfamily. TrmE GTPase family. As to quaternary structure, homodimer. Heterotetramer of two MnmE and two MnmG subunits. K(+) serves as cofactor.

Its subcellular location is the cytoplasm. In terms of biological role, exhibits a very high intrinsic GTPase hydrolysis rate. Involved in the addition of a carboxymethylaminomethyl (cmnm) group at the wobble position (U34) of certain tRNAs, forming tRNA-cmnm(5)s(2)U34. This is tRNA modification GTPase MnmE from Bacillus licheniformis (strain ATCC 14580 / DSM 13 / JCM 2505 / CCUG 7422 / NBRC 12200 / NCIMB 9375 / NCTC 10341 / NRRL NRS-1264 / Gibson 46).